We begin with the raw amino-acid sequence, 292 residues long: Ventral anterior homeobox 2 (292 aa).

The segment covering 1–36 has biased composition (basic and acidic residues); sequence MGDGGAERDRGPKRREEPGGRSGRHGEHRGAEDLRA. The interval 1 to 74 is disordered; it reads MGDGGAERDR…DGQQALGETD (74 aa). Residues 102 to 161 constitute a DNA-binding region (homeobox); the sequence is PKRTRTSFTAEQLYRLEMEFQRCQYVVGRERTELARQLNLSETQVKVWFQNRRTKQKKDQ. Residues 207–242 form a disordered region; the sequence is LPGLPASHRGTSLVDPRNSSPRLNPMPSASASSPLP.

Belongs to the EMX homeobox family. As to expression, expressed in the developing and mature retina.

It localises to the nucleus. In terms of biological role, transcription factor that may function in dorsoventral specification of the forebrain. Regulates the expression of Wnt signaling antagonists including the expression of a truncated TCF7L2 isoform that cannot bind CTNNB1 and acts therefore as a potent dominant-negative Wnt antagonist. Plays a crucial role in eye development and, in particular, in the specification of the ventral optic vesicle. May be a regulator of axial polarization in the retina. The sequence is that of Ventral anterior homeobox 2 (Vax2) from Mus musculus (Mouse).